A 268-amino-acid polypeptide reads, in one-letter code: Tryptophan synthase alpha chain (268 aa).

Residues glutamate 49 and aspartate 60 each act as proton acceptor in the active site.

This sequence belongs to the TrpA family. As to quaternary structure, tetramer of two alpha and two beta chains.

The catalysed reaction is (1S,2R)-1-C-(indol-3-yl)glycerol 3-phosphate + L-serine = D-glyceraldehyde 3-phosphate + L-tryptophan + H2O. The protein operates within amino-acid biosynthesis; L-tryptophan biosynthesis; L-tryptophan from chorismate: step 5/5. The alpha subunit is responsible for the aldol cleavage of indoleglycerol phosphate to indole and glyceraldehyde 3-phosphate. This Haemophilus influenzae (strain PittGG) protein is Tryptophan synthase alpha chain.